Reading from the N-terminus, the 491-residue chain is Endoglucanase 14 (491 aa).

A signal peptide spans 1–31; the sequence is MSQLKIGSSQCLWTSICIVLFVLSMARGAVS. The Nucleophile role is filled by D86. N-linked (GlcNAc...) asparagine glycosylation occurs at N397. Catalysis depends on residues H413, D465, and E474.

Belongs to the glycosyl hydrolase 9 (cellulase E) family.

The protein resides in the secreted. The enzyme catalyses Endohydrolysis of (1-&gt;4)-beta-D-glucosidic linkages in cellulose, lichenin and cereal beta-D-glucans.. This chain is Endoglucanase 14, found in Arabidopsis thaliana (Mouse-ear cress).